A 412-amino-acid polypeptide reads, in one-letter code: 8-amino-7-oxononanoate synthase (412 aa).

Position 106 to 107 (106 to 107 (GY)) interacts with pyridoxal 5'-phosphate. Residue His-131 coordinates substrate. The pyridoxal 5'-phosphate site is built by Ser-187, His-219, and Thr-247. Lys-250 carries the post-translational modification N6-(pyridoxal phosphate)lysine. Thr-370 is a binding site for substrate.

Belongs to the class-II pyridoxal-phosphate-dependent aminotransferase family. BioF subfamily. Homodimer. Pyridoxal 5'-phosphate is required as a cofactor.

It carries out the reaction 6-carboxyhexanoyl-[ACP] + L-alanine + H(+) = (8S)-8-amino-7-oxononanoate + holo-[ACP] + CO2. Its pathway is cofactor biosynthesis; biotin biosynthesis. Functionally, 8-amino-7-oxononanoate synthase; part of the cluster involved in the biosynthesis of biotin (also known as vitamin B8 or vitamin H), a water-soluble vitamin that functions as a prosthetic group of many carboxylases, such as acetyl-CoA carboxylase and pyruvate carboxylase. Catalyzes the decarboxylative condensation of pimeloyl-[acyl-carrier protein] and L-alanine to produce 8-amino-7-oxononanoate (AON). The protein is 8-amino-7-oxononanoate synthase of Emericella nidulans (strain FGSC A4 / ATCC 38163 / CBS 112.46 / NRRL 194 / M139) (Aspergillus nidulans).